Consider the following 591-residue polypeptide: Aspartate--tRNA ligase (591 aa).

An L-aspartate-binding site is contributed by Glu-176. The segment at 200–203 (QILK) is aspartate. Arg-222 is an L-aspartate binding site. ATP is bound by residues 222–224 (RDE) and Gln-231. L-aspartate is bound at residue His-450. Glu-484 contacts ATP. Arg-491 lines the L-aspartate pocket. Residue 536–539 (GLDR) coordinates ATP.

The protein belongs to the class-II aminoacyl-tRNA synthetase family. Type 1 subfamily. As to quaternary structure, homodimer.

The protein resides in the cytoplasm. It carries out the reaction tRNA(Asp) + L-aspartate + ATP = L-aspartyl-tRNA(Asp) + AMP + diphosphate. In terms of biological role, catalyzes the attachment of L-aspartate to tRNA(Asp) in a two-step reaction: L-aspartate is first activated by ATP to form Asp-AMP and then transferred to the acceptor end of tRNA(Asp). This Listeria monocytogenes serotype 4b (strain F2365) protein is Aspartate--tRNA ligase.